A 234-amino-acid chain; its full sequence is Cytochrome b (234 aa).

The next 4 membrane-spanning stretches (helical) occupy residues 33–53, 77–98, 113–133, and 178–198; these read FGSL…FLAM, WLIR…YMHV, WNIG…GYVL, and FFAF…IHLL. Residues histidine 83 and histidine 97 each coordinate heme b. Residues histidine 182 and histidine 196 each coordinate heme b. Histidine 201 lines the a ubiquinone pocket. Residues 226–234 form a helical membrane-spanning segment; the sequence is IKDVLGFLM.

It belongs to the cytochrome b family. As to quaternary structure, the cytochrome bc1 complex contains 11 subunits: 3 respiratory subunits (MT-CYB, CYC1 and UQCRFS1), 2 core proteins (UQCRC1 and UQCRC2) and 6 low-molecular weight proteins (UQCRH/QCR6, UQCRB/QCR7, UQCRQ/QCR8, UQCR10/QCR9, UQCR11/QCR10 and a cleavage product of UQCRFS1). This cytochrome bc1 complex then forms a dimer. The cofactor is heme b.

It is found in the mitochondrion inner membrane. Functionally, component of the ubiquinol-cytochrome c reductase complex (complex III or cytochrome b-c1 complex) that is part of the mitochondrial respiratory chain. The b-c1 complex mediates electron transfer from ubiquinol to cytochrome c. Contributes to the generation of a proton gradient across the mitochondrial membrane that is then used for ATP synthesis. The sequence is that of Cytochrome b (MT-CYB) from Lepus alleni (Antelope jackrabbit).